The chain runs to 524 residues: GMP synthase [glutamine-hydrolyzing] (524 aa).

The Glutamine amidotransferase type-1 domain occupies 8-206 (KILILDFGSQ…VRKLCQCEAR (199 aa)). The Nucleophile role is filled by Cys85. Catalysis depends on residues His180 and Glu182. Residues 207 to 399 (WTTGNIVEDA…LGLPYEMVYR (193 aa)) enclose the GMPS ATP-PPase domain. 234 to 240 (SGGVDSS) lines the ATP pocket.

As to quaternary structure, homodimer.

The catalysed reaction is XMP + L-glutamine + ATP + H2O = GMP + L-glutamate + AMP + diphosphate + 2 H(+). It participates in purine metabolism; GMP biosynthesis; GMP from XMP (L-Gln route): step 1/1. Catalyzes the synthesis of GMP from XMP. The polypeptide is GMP synthase [glutamine-hydrolyzing] (Methylococcus capsulatus (strain ATCC 33009 / NCIMB 11132 / Bath)).